The following is a 203-amino-acid chain: Ribosome maturation factor RimP (203 aa).

Residues 184 to 203 (RRGSAPVEDEEGEGEAPTAH) are disordered.

Belongs to the RimP family.

It localises to the cytoplasm. Functionally, required for maturation of 30S ribosomal subunits. In Methylobacterium nodulans (strain LMG 21967 / CNCM I-2342 / ORS 2060), this protein is Ribosome maturation factor RimP.